The sequence spans 432 residues: Adenylosuccinate synthetase (432 aa).

GTP contacts are provided by residues 12-18 (GDEGKGK) and 40-42 (GHT). The Proton acceptor role is filled by Asp13. Residues Asp13 and Gly40 each contribute to the Mg(2+) site. Residues 13-16 (DEGK), 38-41 (NAGH), Thr132, Arg146, Gln226, Thr241, and Arg305 each bind IMP. The active-site Proton donor is the His41. 301 to 307 (TVTGRKR) serves as a coordination point for substrate. GTP contacts are provided by residues Arg307, 333–335 (KLD), and 415–417 (STS).

It belongs to the adenylosuccinate synthetase family. Homodimer. Requires Mg(2+) as cofactor.

It is found in the cytoplasm. It catalyses the reaction IMP + L-aspartate + GTP = N(6)-(1,2-dicarboxyethyl)-AMP + GDP + phosphate + 2 H(+). Its pathway is purine metabolism; AMP biosynthesis via de novo pathway; AMP from IMP: step 1/2. In terms of biological role, plays an important role in the de novo pathway of purine nucleotide biosynthesis. Catalyzes the first committed step in the biosynthesis of AMP from IMP. This Sinorhizobium medicae (strain WSM419) (Ensifer medicae) protein is Adenylosuccinate synthetase.